The sequence spans 378 residues: Probable methyltransferase At1g29790 (378 aa).

The Cytoplasmic segment spans residues M1–M6. A helical; Signal-anchor for type II membrane protein membrane pass occupies residues S7–S29. Topologically, residues T30–R378 are lumenal. A disordered region spans residues T67–S87. Over residues S74–S87 the composition is skewed to low complexity. The N-linked (GlcNAc...) asparagine glycan is linked to N247.

This sequence belongs to the methyltransferase superfamily.

It localises to the golgi apparatus membrane. The chain is Probable methyltransferase At1g29790 from Arabidopsis thaliana (Mouse-ear cress).